Consider the following 192-residue polypeptide: Pterin-4-alpha-carbinolamine dehydratase (192 aa).

The protein belongs to the pterin-4-alpha-carbinolamine dehydratase family.

It catalyses the reaction (4aS,6R)-4a-hydroxy-L-erythro-5,6,7,8-tetrahydrobiopterin = (6R)-L-erythro-6,7-dihydrobiopterin + H2O. This Drosophila melanogaster (Fruit fly) protein is Pterin-4-alpha-carbinolamine dehydratase (Pcd).